The primary structure comprises 214 residues: MNYPHPIIAREGWPFIAIAAVIALLIHAVGGFGFAWPFWLLLVFVVQFFRDPQRPIPAQPNAVLCPADGRIVAVETAQDPYANREALKISVFMNVFNVHSQRSPVDGAISKVEYFPGAFLNAAIDKASTENERNAVVIQTASGKTVTSVQIAGLIARRILCYVRAGEPLSRGQRYGFIRFGSRVDVYLPLGSRAKVSIGEKVYASSTILAELEQ.

Ser182 acts as the Schiff-base intermediate with substrate; via pyruvic acid in catalysis. Ser182 carries the post-translational modification Pyruvic acid (Ser); by autocatalysis.

It belongs to the phosphatidylserine decarboxylase family. PSD-A subfamily. In terms of assembly, heterodimer of a large membrane-associated beta subunit and a small pyruvoyl-containing alpha subunit. Requires pyruvate as cofactor. Is synthesized initially as an inactive proenzyme. Formation of the active enzyme involves a self-maturation process in which the active site pyruvoyl group is generated from an internal serine residue via an autocatalytic post-translational modification. Two non-identical subunits are generated from the proenzyme in this reaction, and the pyruvate is formed at the N-terminus of the alpha chain, which is derived from the carboxyl end of the proenzyme. The post-translation cleavage follows an unusual pathway, termed non-hydrolytic serinolysis, in which the side chain hydroxyl group of the serine supplies its oxygen atom to form the C-terminus of the beta chain, while the remainder of the serine residue undergoes an oxidative deamination to produce ammonia and the pyruvoyl prosthetic group on the alpha chain.

It localises to the cell membrane. The catalysed reaction is a 1,2-diacyl-sn-glycero-3-phospho-L-serine + H(+) = a 1,2-diacyl-sn-glycero-3-phosphoethanolamine + CO2. The protein operates within phospholipid metabolism; phosphatidylethanolamine biosynthesis; phosphatidylethanolamine from CDP-diacylglycerol: step 2/2. In terms of biological role, catalyzes the formation of phosphatidylethanolamine (PtdEtn) from phosphatidylserine (PtdSer). In Burkholderia cenocepacia (strain ATCC BAA-245 / DSM 16553 / LMG 16656 / NCTC 13227 / J2315 / CF5610) (Burkholderia cepacia (strain J2315)), this protein is Phosphatidylserine decarboxylase proenzyme.